The following is a 219-amino-acid chain: Small ribosomal subunit protein uS3 (219 aa).

The region spanning 38–106 is the KH type-2 domain; sequence IRKYINTKLA…KVHINIVEIK (69 aa).

It belongs to the universal ribosomal protein uS3 family. As to quaternary structure, part of the 30S ribosomal subunit. Forms a tight complex with proteins S10 and S14.

Functionally, binds the lower part of the 30S subunit head. Binds mRNA in the 70S ribosome, positioning it for translation. The sequence is that of Small ribosomal subunit protein uS3 from Latilactobacillus sakei subsp. sakei (strain 23K) (Lactobacillus sakei subsp. sakei).